The primary structure comprises 463 residues: 6-phosphofructo-2-kinase/fructose-2,6-bisphosphatase 3 (463 aa).

The segment at 1–246 (MPLELTQSRV…VYYLMNIHWQ (246 aa)) is 6-phosphofructo-2-kinase. Residue 42–50 (GLPARGKTY) participates in ATP binding. R75 and R99 together coordinate beta-D-fructose 6-phosphate. D125 is an active-site residue. Beta-D-fructose 6-phosphate-binding residues include T127 and R133. The active site involves C155. 164–169 (NIMEVK) serves as a coordination point for ATP. Beta-D-fructose 6-phosphate is bound by residues K169, R191, and Y195. Residues 247–463 (PRTIYLCRHG…PNPLMRSNSH (217 aa)) are fructose-2,6-bisphosphatase. A beta-D-fructose 2,6-bisphosphate-binding site is contributed by R254. The active-site Tele-phosphohistidine intermediate is H255. Residues N261 and G267 each coordinate beta-D-fructose 2,6-bisphosphate. The Proton donor/acceptor role is filled by E324. Y335 contacts beta-D-fructose 2,6-bisphosphate. Residue 346–349 (YALA) coordinates ATP. Beta-D-fructose 2,6-bisphosphate-binding residues include K353, Y364, and Q390. ATP contacts are provided by residues 390-394 (QAVCV) and Y426. A disordered region spans residues 444 to 463 (RERSEDAKKGPNPLMRSNSH). The residue at position 462 (S462) is a Phosphoserine; by AMPK and PKA.

This sequence in the C-terminal section; belongs to the phosphoglycerate mutase family. As to quaternary structure, homodimer. Forms a heterodimer with PFKFB2. Post-translationally, phosphorylation by AMPK stimulates activity. Brain.

The catalysed reaction is beta-D-fructose 2,6-bisphosphate + H2O = beta-D-fructose 6-phosphate + phosphate. The enzyme catalyses beta-D-fructose 6-phosphate + ATP = beta-D-fructose 2,6-bisphosphate + ADP + H(+). Functionally, catalyzes both the synthesis and degradation of fructose 2,6-bisphosphate. This chain is 6-phosphofructo-2-kinase/fructose-2,6-bisphosphatase 3 (PFKFB3), found in Bos taurus (Bovine).